The sequence spans 706 residues: Ribosomal RNA large subunit methyltransferase K/L (706 aa).

One can recognise a THUMP domain in the interval 43–154 (LMYQSLLWSR…RDMASVALDL (112 aa)).

Belongs to the methyltransferase superfamily. RlmKL family.

The protein resides in the cytoplasm. The catalysed reaction is guanosine(2445) in 23S rRNA + S-adenosyl-L-methionine = N(2)-methylguanosine(2445) in 23S rRNA + S-adenosyl-L-homocysteine + H(+). The enzyme catalyses guanosine(2069) in 23S rRNA + S-adenosyl-L-methionine = N(2)-methylguanosine(2069) in 23S rRNA + S-adenosyl-L-homocysteine + H(+). Specifically methylates the guanine in position 2445 (m2G2445) and the guanine in position 2069 (m7G2069) of 23S rRNA. The sequence is that of Ribosomal RNA large subunit methyltransferase K/L from Yersinia pestis bv. Antiqua (strain Antiqua).